The primary structure comprises 297 residues: uncharacterized protein (297 aa).

The tract at residues 1–29 (MAESKAKNMFQKLSLTPKRNHEHDAGRNI) is disordered. Residues 19-29 (RNHEHDAGRNI) show a composition bias toward basic and acidic residues.

This is an uncharacterized protein from Caenorhabditis elegans.